The chain runs to 775 residues: Isopimaradiene synthase (775 aa).

A chloroplast-targeting transit peptide spans 1–36; that stretch reads MFSSSLKLKTNPLMDNKIHRSSSDRDFRGSTISSVK. Residues Asp525, Asp529, Asn669, Gln672, and Glu677 each contribute to the Mg(2+) site. A DDXXD motif motif is present at residues 525 to 529; the sequence is DDFFD.

It belongs to the terpene synthase family. Mg(2+) serves as cofactor. Ubiquitous expression in roots, stems, leaves and flowers.

The protein resides in the plastid. Its subcellular location is the chloroplast. It carries out the reaction (+)-copalyl diphosphate = isopimara-8(14),15-diene + diphosphate. It participates in secondary metabolite biosynthesis; terpenoid biosynthesis. Involved in the biosynthesis of ent-kaurene diterpenoids natural products such as oridonin, miltiradiene, eriocalyxin B and nezukol, known to exhibit antitumor, anti-inflammatory and antibacterial activities. Catalyzes the conversion of (+)-copalyl diphosphate ((+)-CPP) to isopimaradiene. This Isodon rubescens (Rabdosia rubescens) protein is Isopimaradiene synthase.